A 247-amino-acid chain; its full sequence is Probable transcriptional regulatory protein TDE_1487 (247 aa).

Belongs to the TACO1 family.

It localises to the cytoplasm. This chain is Probable transcriptional regulatory protein TDE_1487, found in Treponema denticola (strain ATCC 35405 / DSM 14222 / CIP 103919 / JCM 8153 / KCTC 15104).